The following is a 575-amino-acid chain: Alpha-(1,6)-fucosyltransferase (575 aa).

Over 1 to 9 (MRAWTGSWR) the chain is Cytoplasmic. The helical; Signal-anchor for type II membrane protein transmembrane segment at 10-30 (WIMLILFAWGTLLFYIGGHLV) threads the bilayer. The Lumenal segment spans residues 31-575 (RDNDHPDHSS…KYPTYPEAEK (545 aa)). 3 disulfides stabilise this stretch: C204–C266, C212–C230, and C218–C222. One can recognise a GT23 domain in the interval 206–493 (KARKLVCNIN…PDASANFHSL (288 aa)). Residue S278 is modified to Phosphoserine. The short motif at 299–305 (PRPPYLP) is the SH3-binding element. The segment at 365–366 (RR) is important for donor substrate binding. An intrachain disulfide couples C465 to C472. The SH3 domain occupies 502–563 (QNAHNQIAVY…PSYKVREKIE (62 aa)).

Belongs to the glycosyltransferase 23 family. Tyrosine phosphorylated by PKDCC/VLK.

The protein localises to the golgi apparatus. The protein resides in the golgi stack membrane. The catalysed reaction is N(4)-{beta-D-GlcNAc-(1-&gt;2)-alpha-D-Man-(1-&gt;3)-[beta-D-GlcNAc-(1-&gt;2)-alpha-D-Man-(1-&gt;6)]-beta-D-Man-(1-&gt;4)-beta-D-GlcNAc-(1-&gt;4)-beta-D-GlcNAc}-L-asparaginyl-[protein] + GDP-beta-L-fucose = an N(4)-{beta-D-GlcNAc-(1-&gt;2)-alpha-D-Man-(1-&gt;3)-[beta-D-GlcNAc-(1-&gt;2)-alpha-D-Man-(1-&gt;6)]-beta-D-Man-(1-&gt;4)-beta-D-GlcNAc-(1-&gt;4)-[alpha-L-Fuc-(1-&gt;6)]-beta-D-GlcNAc}-L-asparaginyl-[protein] + GDP + H(+). Its pathway is protein modification; protein glycosylation. Catalyzes the addition of fucose in alpha 1-6 linkage to the first GlcNAc residue, next to the peptide chains in N-glycans. This chain is Alpha-(1,6)-fucosyltransferase (Fut8), found in Mus musculus (Mouse).